A 603-amino-acid polypeptide reads, in one-letter code: Sorting nexin-41 (603 aa).

The interval 1 to 36 (MNSFRESDEEDNNPFSGTNHLYASGIGAVPEGDDDF) is disordered. The region spanning 121 to 241 (AEGSLGALRI…QKFLNPEYIW (121 aa)) is the PX domain. A 1,2-diacyl-sn-glycero-3-phospho-(1D-myo-inositol-3-phosphate) is bound by residues arginine 159, serine 161, lysine 185, and arginine 208.

This sequence belongs to the sorting nexin family.

It is found in the endosome membrane. The protein resides in the endomembrane system. May be required for cytoplasm to vacuole transport (Cvt) and pexophagy. The sequence is that of Sorting nexin-41 (SNX41) from Eremothecium gossypii (strain ATCC 10895 / CBS 109.51 / FGSC 9923 / NRRL Y-1056) (Yeast).